The chain runs to 68 residues: Large ribosomal subunit protein uL29 (68 aa).

It belongs to the universal ribosomal protein uL29 family.

This chain is Large ribosomal subunit protein uL29, found in Erythrobacter litoralis (strain HTCC2594).